A 65-amino-acid polypeptide reads, in one-letter code: GRDAYIAQPENCVYECAKNSYCNDLCTKNGAKSGYCQWLGRWGNACYCIDLPDKVPIRIEGKCHF.

One can recognise an LCN-type CS-alpha/beta domain in the interval 2–64; sequence RDAYIAQPEN…VPIRIEGKCH (63 aa). 4 disulfides stabilise this stretch: Cys12–Cys63, Cys16–Cys36, Cys22–Cys46, and Cys26–Cys48. Phe65 carries the phenylalanine amide modification.

It belongs to the long (4 C-C) scorpion toxin superfamily. Sodium channel inhibitor family. Alpha subfamily. As to expression, expressed by the venom gland.

It is found in the secreted. Its function is as follows. Binds to sodium channels (Nav) and inhibits the inactivation of the activated channels, thereby blocking neuronal transmission. In Buthus occitanus tunetanus (Common European scorpion), this protein is Neurotoxin Bot2.